Reading from the N-terminus, the 385-residue chain is Glucans biosynthesis protein C (385 aa).

10 helical membrane passes run A17–W37, M60–L80, V91–Q111, I137–F157, K173–I193, F212–I232, L239–L259, T274–G294, A311–T331, and W338–I358.

It belongs to the acyltransferase 3 family. OpgC subfamily.

It localises to the cell membrane. Its pathway is glycan metabolism; osmoregulated periplasmic glucan (OPG) biosynthesis. Necessary for the succinyl substitution of periplasmic glucans. Could catalyze the transfer of succinyl residues from the cytoplasmic side of the membrane to the nascent glucan backbones on the periplasmic side of the membrane. This Shigella sonnei (strain Ss046) protein is Glucans biosynthesis protein C.